We begin with the raw amino-acid sequence, 288 residues long: 4-hydroxybenzoate octaprenyltransferase (288 aa).

The next 8 membrane-spanning stretches (helical) occupy residues 23–43 (IGSL…GRGI), 46–66 (AKIL…GCVV), 98–118 (ILFV…NSMT), 141–161 (LPQV…FAAV), 163–183 (ESLP…TVAY), 213–233 (LIIG…GWLM), 234–254 (NLGG…THQQ), and 268–288 (AFLN…ISYW).

It belongs to the UbiA prenyltransferase family. It depends on Mg(2+) as a cofactor.

The protein localises to the cell inner membrane. It catalyses the reaction all-trans-octaprenyl diphosphate + 4-hydroxybenzoate = 4-hydroxy-3-(all-trans-octaprenyl)benzoate + diphosphate. The protein operates within cofactor biosynthesis; ubiquinone biosynthesis. Its function is as follows. Catalyzes the prenylation of para-hydroxybenzoate (PHB) with an all-trans polyprenyl group. Mediates the second step in the final reaction sequence of ubiquinone-8 (UQ-8) biosynthesis, which is the condensation of the polyisoprenoid side chain with PHB, generating the first membrane-bound Q intermediate 3-octaprenyl-4-hydroxybenzoate. The chain is 4-hydroxybenzoate octaprenyltransferase from Yersinia pseudotuberculosis serotype IB (strain PB1/+).